The primary structure comprises 426 residues: Trigger factor (426 aa).

The 84-residue stretch at 166 to 249 folds into the PPIase FKBP-type domain; sequence GDIVTFDFKG…IIEVKARELP (84 aa).

Belongs to the FKBP-type PPIase family. Tig subfamily.

It localises to the cytoplasm. It catalyses the reaction [protein]-peptidylproline (omega=180) = [protein]-peptidylproline (omega=0). In terms of biological role, involved in protein export. Acts as a chaperone by maintaining the newly synthesized protein in an open conformation. Functions as a peptidyl-prolyl cis-trans isomerase. In Mesoplasma florum (strain ATCC 33453 / NBRC 100688 / NCTC 11704 / L1) (Acholeplasma florum), this protein is Trigger factor.